We begin with the raw amino-acid sequence, 107 residues long: Phosphoribosyl-ATP pyrophosphatase (107 aa).

The protein belongs to the PRA-PH family.

The protein resides in the cytoplasm. It catalyses the reaction 1-(5-phospho-beta-D-ribosyl)-ATP + H2O = 1-(5-phospho-beta-D-ribosyl)-5'-AMP + diphosphate + H(+). It participates in amino-acid biosynthesis; L-histidine biosynthesis; L-histidine from 5-phospho-alpha-D-ribose 1-diphosphate: step 2/9. This is Phosphoribosyl-ATP pyrophosphatase from Methylobacterium nodulans (strain LMG 21967 / CNCM I-2342 / ORS 2060).